The chain runs to 198 residues: Holliday junction resolvase RecU (198 aa).

The disordered stretch occupies residues 1-22 (MVNYPHKVSSQKRQTSLSQPKN). Over residues 11 to 22 (QKRQTSLSQPKN) the composition is skewed to polar residues. Threonine 81, aspartate 83, glutamate 96, and glutamine 115 together coordinate Mg(2+).

Belongs to the RecU family. Mg(2+) serves as cofactor.

It localises to the cytoplasm. It carries out the reaction Endonucleolytic cleavage at a junction such as a reciprocal single-stranded crossover between two homologous DNA duplexes (Holliday junction).. Its function is as follows. Endonuclease that resolves Holliday junction intermediates in genetic recombination. Cleaves mobile four-strand junctions by introducing symmetrical nicks in paired strands. Promotes annealing of linear ssDNA with homologous dsDNA. Required for DNA repair, homologous recombination and chromosome segregation. The sequence is that of Holliday junction resolvase RecU from Streptococcus pneumoniae (strain P1031).